Here is a 134-residue protein sequence, read N- to C-terminus: ATP synthase epsilon chain (134 aa).

It belongs to the ATPase epsilon chain family. As to quaternary structure, F-type ATPases have 2 components, CF(1) - the catalytic core - and CF(0) - the membrane proton channel. CF(1) has five subunits: alpha(3), beta(3), gamma(1), delta(1), epsilon(1). CF(0) has three main subunits: a, b and c.

The protein localises to the cell membrane. Produces ATP from ADP in the presence of a proton gradient across the membrane. This Listeria monocytogenes serotype 4a (strain HCC23) protein is ATP synthase epsilon chain.